A 522-amino-acid polypeptide reads, in one-letter code: Glucose-6-phosphate isomerase (522 aa).

The active-site Proton donor is the glutamate 351. Active-site residues include histidine 382 and lysine 491.

It belongs to the GPI family.

The protein resides in the cytoplasm. The enzyme catalyses alpha-D-glucose 6-phosphate = beta-D-fructose 6-phosphate. It participates in carbohydrate biosynthesis; gluconeogenesis. The protein operates within carbohydrate degradation; glycolysis; D-glyceraldehyde 3-phosphate and glycerone phosphate from D-glucose: step 2/4. Catalyzes the reversible isomerization of glucose-6-phosphate to fructose-6-phosphate. The polypeptide is Glucose-6-phosphate isomerase (Albidiferax ferrireducens (strain ATCC BAA-621 / DSM 15236 / T118) (Rhodoferax ferrireducens)).